A 244-amino-acid polypeptide reads, in one-letter code: Lymphotoxin-beta (244 aa).

At 1–18 (MGALGLEGRGGRLQGRGS) the chain is on the cytoplasmic side. A helical; Signal-anchor for type II membrane protein transmembrane segment spans residues 19–48 (LLLAVAGATSLVTLLLAVPITVLAVLALVP). At 49 to 244 (QDQGGLVTET…KTFFGAVMVG (196 aa)) the chain is on the extracellular side. Residues 88–243 (PAAHLIGAPL…GKTFFGAVMV (156 aa)) form the THD domain. N-linked (GlcNAc...) asparagine glycosylation is present at Asn-222.

Belongs to the tumor necrosis factor family. Heterotrimer of either two LTB and one LTA subunits or (less prevalent) two LTA and one LTB subunits.

Its subcellular location is the membrane. Functionally, cytokine that binds to LTBR/TNFRSF3. May play a specific role in immune response regulation. Provides the membrane anchor for the attachment of the heterotrimeric complex to the cell surface. The chain is Lymphotoxin-beta (LTB) from Pan troglodytes (Chimpanzee).